Here is a 160-residue protein sequence, read N- to C-terminus: Sec-independent protein translocase protein TatB (160 aa).

A helical membrane pass occupies residues 1-21; sequence MFGMGFFEILVVLVVAIIFLG. Residues 118-160 form a disordered region; the sequence is HLNEEVSNEEALNKEVSSDESPKEVQLATDNNTKEHDKEKEHV. Basic and acidic residues-rich tracts occupy residues 128–140 and 149–160; these read ALNK…ESPK and NTKEHDKEKEHV.

This sequence belongs to the TatB family. In terms of assembly, the Tat system comprises two distinct complexes: a TatABC complex, containing multiple copies of TatA, TatB and TatC subunits, and a separate TatA complex, containing only TatA subunits. Substrates initially bind to the TatABC complex, which probably triggers association of the separate TatA complex to form the active translocon.

The protein resides in the cell inner membrane. In terms of biological role, part of the twin-arginine translocation (Tat) system that transports large folded proteins containing a characteristic twin-arginine motif in their signal peptide across membranes. Together with TatC, TatB is part of a receptor directly interacting with Tat signal peptides. TatB may form an oligomeric binding site that transiently accommodates folded Tat precursor proteins before their translocation. This chain is Sec-independent protein translocase protein TatB, found in Helicobacter pylori (strain HPAG1).